A 229-amino-acid chain; its full sequence is Cytochrome c oxidase subunit 2 (229 aa).

Over 1–14 (MANHLQFNFQDATS) the chain is Mitochondrial intermembrane. The helical transmembrane segment at 15–45 (PLMQELVKFHDHSLTILFFISALILYVLMMT) threads the bilayer. Residues 46 to 59 (SLSKLTNKNILDSQ) lie on the Mitochondrial matrix side of the membrane. Residues 60–87 (EIEMVWTVIPAFILIMLALPSIQILYLM) traverse the membrane as a helical segment. The Mitochondrial intermembrane portion of the chain corresponds to 88 to 229 (DEIASPDITI…FESWIIKLSL (142 aa)). Residues H162, C197, E199, C201, H205, and M208 each coordinate Cu cation. E199 contacts Mg(2+).

The protein belongs to the cytochrome c oxidase subunit 2 family. In terms of assembly, component of the cytochrome c oxidase (complex IV, CIV), a multisubunit enzyme composed of 14 subunits. The complex is composed of a catalytic core of 3 subunits MT-CO1, MT-CO2 and MT-CO3, encoded in the mitochondrial DNA, and 11 supernumerary subunits COX4I, COX5A, COX5B, COX6A, COX6B, COX6C, COX7A, COX7B, COX7C, COX8 and NDUFA4, which are encoded in the nuclear genome. The complex exists as a monomer or a dimer and forms supercomplexes (SCs) in the inner mitochondrial membrane with NADH-ubiquinone oxidoreductase (complex I, CI) and ubiquinol-cytochrome c oxidoreductase (cytochrome b-c1 complex, complex III, CIII), resulting in different assemblies (supercomplex SCI(1)III(2)IV(1) and megacomplex MCI(2)III(2)IV(2)). Found in a complex with TMEM177, COA6, COX18, COX20, SCO1 and SCO2. Interacts with TMEM177 in a COX20-dependent manner. Interacts with COX20. Interacts with COX16. Cu cation is required as a cofactor.

It is found in the mitochondrion inner membrane. The enzyme catalyses 4 Fe(II)-[cytochrome c] + O2 + 8 H(+)(in) = 4 Fe(III)-[cytochrome c] + 2 H2O + 4 H(+)(out). Component of the cytochrome c oxidase, the last enzyme in the mitochondrial electron transport chain which drives oxidative phosphorylation. The respiratory chain contains 3 multisubunit complexes succinate dehydrogenase (complex II, CII), ubiquinol-cytochrome c oxidoreductase (cytochrome b-c1 complex, complex III, CIII) and cytochrome c oxidase (complex IV, CIV), that cooperate to transfer electrons derived from NADH and succinate to molecular oxygen, creating an electrochemical gradient over the inner membrane that drives transmembrane transport and the ATP synthase. Cytochrome c oxidase is the component of the respiratory chain that catalyzes the reduction of oxygen to water. Electrons originating from reduced cytochrome c in the intermembrane space (IMS) are transferred via the dinuclear copper A center (CU(A)) of subunit 2 and heme A of subunit 1 to the active site in subunit 1, a binuclear center (BNC) formed by heme A3 and copper B (CU(B)). The BNC reduces molecular oxygen to 2 water molecules using 4 electrons from cytochrome c in the IMS and 4 protons from the mitochondrial matrix. The protein is Cytochrome c oxidase subunit 2 (MT-CO2) of Myxine glutinosa (Atlantic hagfish).